The chain runs to 525 residues: Potassium voltage-gated channel subfamily A member 3 (525 aa).

The tract at residues 1-23 (MTVVPGDHLLEPEAAGGGGGDPP) is disordered. The Cytoplasmic portion of the chain corresponds to 1–184 (MTVVPGDHLL…EYPESSGPAR (184 aa)). The helical transmembrane segment at 185–203 (GIAIVSVLVILISIVIFCL) threads the bilayer. At 204–244 (ETLPEFRDEKDYPASPSQDVFEAANNSTSGASSGASSFSDP) the chain is on the extracellular side. Residue Asn229 is glycosylated (N-linked (GlcNAc...) asparagine). The helical transmembrane segment at 245 to 266 (FFVVETLCIIWFSFELLVRFFA) threads the bilayer. Cys267 carries S-palmitoyl cysteine lipidation. At 267–277 (CPSKATFSRNI) the chain is on the cytoplasmic side. Residues 278 to 298 (MNLIDIVAIIPYFITLGTELA) form a helical membrane-spanning segment. Residues 299 to 312 (ERQGNGQQAMSLAI) are Extracellular-facing. The helical; Voltage-sensor transmembrane segment at 313 to 331 (LRVIRLVRVFRIFKLSRHS) threads the bilayer. The Cytoplasmic portion of the chain corresponds to 332 to 347 (KGLQILGQTLKASMRE). A helical transmembrane segment spans residues 348–367 (LGLLIFFLFIGVILFSSAVY). Residues 368-408 (FAEADDPSSGFNSIPDAFWWAVVTMTTVGYGDMHPVTIGGK) are Extracellular-facing. Positions 394-399 (TVGYGD) match the Selectivity filter motif. A helical transmembrane segment spans residues 409–431 (IVGSLCAIAGVLTIALPVPVIVS). Over 432-525 (NFNYFYHRET…VNIKKIFTDV (94 aa)) the chain is Cytoplasmic. The segment at 432–525 (NFNYFYHRET…VNIKKIFTDV (94 aa)) is interaction with KCNE4. Tyr449 bears the Phosphotyrosine mark. Residue Ser470 is modified to Phosphoserine; by PKA. Positions 523-525 (TDV) match the PDZ-binding motif.

This sequence belongs to the potassium channel family. A (Shaker) (TC 1.A.1.2) subfamily. Kv1.3/KCNA3 sub-subfamily. Homotetramer. Forms heterooligomers with KCNE4 which inhibits KCNA3 activity by impairing localization to the cell membrane. The stoichiometry of KCNA3 and KCNE4 in the heterooligomers are 4:1, 4:2, 4:3 or 4:4 respectively. Increasing the number of KCNE4 subunits steadily slows the activation KCNA3 and decreases its abundance at the cell membrane. However, a single subunit of KCNE4 is sufficient for the cooperative enhancement of the inactivating function of the channel. Interacts with SEC24D; this interaction is reduced in the presence of KCNE4. Interacts with DLG1, DLG2 and DLG4 via their PDZ domains. In terms of processing, phosphorylation on Tyr-449 inhibits its channel activity. N-glycosylation promotes the cell surface expression.

The protein localises to the cell membrane. The enzyme catalyses K(+)(in) = K(+)(out). Its activity is regulated as follows. Activity is up-regulated by JAK2. Its function is as follows. Mediates the voltage-dependent potassium ion permeability of excitable membranes. Assuming opened or closed conformations in response to the voltage difference across the membrane, the protein forms a potassium-selective channel through which potassium ions may pass in accordance with their electrochemical gradient. The polypeptide is Potassium voltage-gated channel subfamily A member 3 (Kcna3) (Rattus norvegicus (Rat)).